Reading from the N-terminus, the 255-residue chain is 1-(5-phosphoribosyl)-5-[(5-phosphoribosylamino)methylideneamino] imidazole-4-carboxamide isomerase (255 aa).

Aspartate 8 (proton acceptor) is an active-site residue. Aspartate 129 functions as the Proton donor in the catalytic mechanism.

Belongs to the HisA/HisF family.

The protein localises to the cytoplasm. It catalyses the reaction 1-(5-phospho-beta-D-ribosyl)-5-[(5-phospho-beta-D-ribosylamino)methylideneamino]imidazole-4-carboxamide = 5-[(5-phospho-1-deoxy-D-ribulos-1-ylimino)methylamino]-1-(5-phospho-beta-D-ribosyl)imidazole-4-carboxamide. It functions in the pathway amino-acid biosynthesis; L-histidine biosynthesis; L-histidine from 5-phospho-alpha-D-ribose 1-diphosphate: step 4/9. The sequence is that of 1-(5-phosphoribosyl)-5-[(5-phosphoribosylamino)methylideneamino] imidazole-4-carboxamide isomerase from Gloeobacter violaceus (strain ATCC 29082 / PCC 7421).